Here is a 67-residue protein sequence, read N- to C-terminus: Small ribosomal subunit protein eS17 (67 aa).

The protein belongs to the eukaryotic ribosomal protein eS17 family.

This is Small ribosomal subunit protein eS17 from Thermococcus gammatolerans (strain DSM 15229 / JCM 11827 / EJ3).